Here is a 475-residue protein sequence, read N- to C-terminus: Ankyrin repeat, SAM and basic leucine zipper domain-containing protein 1 (475 aa).

The segment at Met1–Gly24 is disordered. A phosphoserine mark is found at Ser17, Ser18, and Ser20. ANK repeat units follow at residues Glu45–Ser74, Tyr78–Phe107, Asp110–Val144, Arg148–Ala177, Asn181–Leu210, and Asp214–Gly243. Residues Ser272–Glu334 form the SAM domain.

As to quaternary structure, interacts with DDX4, PIWIL1, RANBP9 and TDRD1.

The protein resides in the cytoplasm. Functionally, plays a central role during spermatogenesis by repressing transposable elements and preventing their mobilization, which is essential for the germline integrity. Acts via the piRNA metabolic process, which mediates the repression of transposable elements during meiosis by forming complexes composed of piRNAs and Piwi proteins and governs the methylation and subsequent repression of transposons. Its association with pi-bodies suggests a participation in the primary piRNAs metabolic process. Required prior to the pachytene stage to facilitate the production of multiple types of piRNAs, including those associated with repeats involved in the regulation of retrotransposons. May act by mediating protein-protein interactions during germ cell maturation. The chain is Ankyrin repeat, SAM and basic leucine zipper domain-containing protein 1 (ASZ1) from Neofelis nebulosa (Clouded leopard).